A 196-amino-acid chain; its full sequence is Probable malonic semialdehyde reductase RutE (196 aa).

The protein belongs to the nitroreductase family. HadB/RutE subfamily. It depends on FMN as a cofactor.

It carries out the reaction 3-hydroxypropanoate + NADP(+) = 3-oxopropanoate + NADPH + H(+). Its function is as follows. May reduce toxic product malonic semialdehyde to 3-hydroxypropionic acid, which is excreted. This is Probable malonic semialdehyde reductase RutE from Escherichia coli O81 (strain ED1a).